Here is a 179-residue protein sequence, read N- to C-terminus: Large ribosomal subunit protein uL6 (179 aa).

The protein belongs to the universal ribosomal protein uL6 family. In terms of assembly, part of the 50S ribosomal subunit.

Its function is as follows. This protein binds to the 23S rRNA, and is important in its secondary structure. It is located near the subunit interface in the base of the L7/L12 stalk, and near the tRNA binding site of the peptidyltransferase center. This chain is Large ribosomal subunit protein uL6, found in Akkermansia muciniphila (strain ATCC BAA-835 / DSM 22959 / JCM 33894 / BCRC 81048 / CCUG 64013 / CIP 107961 / Muc).